Here is a 441-residue protein sequence, read N- to C-terminus: Zinc finger and BTB domain-containing protein 8A (441 aa).

Residues 24 to 92 (CDCSILVEGK…VYSGKLSLTG (69 aa)) form the BTB domain. 2 stretches are compositionally biased toward polar residues: residues 146 to 170 (ERSS…SPDQ) and 178 to 197 (KSWS…QQPL). Residues 146 to 252 (ERSSFYSSGW…SEEQAQMNAE (107 aa)) form a disordered region. 2 positions are modified to phosphoserine: Ser161 and Ser167. Glycyl lysine isopeptide (Lys-Gly) (interchain with G-Cter in SUMO2) cross-links involve residues Lys178, Lys182, and Lys199. The segment covering 198–208 (TKHEQRKDSIK) has biased composition (basic and acidic residues). Over residues 234 to 248 (SDSSSHASQSEEQAQ) the composition is skewed to low complexity. 2 consecutive C2H2-type zinc fingers follow at residues 282–304 (FKCP…LRCH) and 310–333 (YPCQ…RTIH). Residue Lys437 forms a Glycyl lysine isopeptide (Lys-Gly) (interchain with G-Cter in SUMO2) linkage.

Its subcellular location is the nucleus. In terms of biological role, may be involved in transcriptional regulation. This is Zinc finger and BTB domain-containing protein 8A (ZBTB8A) from Bos taurus (Bovine).